A 433-amino-acid chain; its full sequence is Aspartate--tRNA(Asp/Asn) ligase (433 aa).

Glutamate 167 provides a ligand contact to L-aspartate. Positions glutamine 189 to lysine 192 are aspartate. Arginine 211 lines the L-aspartate pocket. ATP-binding positions include arginine 211–glutamate 213, arginine 219–leucine 221, and glutamate 356. 2 residues coordinate Mg(2+): glutamate 356 and serine 359. Residues serine 359 and arginine 363 each coordinate L-aspartate. Position 404–407 (glycine 404–arginine 407) interacts with ATP.

The protein belongs to the class-II aminoacyl-tRNA synthetase family. Type 2 subfamily. Homodimer. Mg(2+) serves as cofactor.

Its subcellular location is the cytoplasm. It catalyses the reaction tRNA(Asx) + L-aspartate + ATP = L-aspartyl-tRNA(Asx) + AMP + diphosphate. Its function is as follows. Aspartyl-tRNA synthetase with relaxed tRNA specificity since it is able to aspartylate not only its cognate tRNA(Asp) but also tRNA(Asn). Reaction proceeds in two steps: L-aspartate is first activated by ATP to form Asp-AMP and then transferred to the acceptor end of tRNA(Asp/Asn). In Haloferax volcanii (Halobacterium volcanii), this protein is Aspartate--tRNA(Asp/Asn) ligase.